The chain runs to 198 residues: Transmembrane protein 17 (198 aa).

N13 and N23 each carry an N-linked (GlcNAc...) asparagine glycan. Transmembrane regions (helical) follow at residues M45–L65, F78–G98, L110–F130, and A142–L162.

The protein belongs to the TMEM17 family. As to quaternary structure, part of the tectonic-like complex (also named B9 complex).

Its subcellular location is the cell projection. The protein resides in the cilium membrane. Functionally, transmembrane component of the tectonic-like complex, a complex localized at the transition zone of primary cilia and acting as a barrier that prevents diffusion of transmembrane proteins between the cilia and plasma membranes. Required for ciliogenesis and sonic hedgehog/SHH signaling. The chain is Transmembrane protein 17 (TMEM17) from Bos taurus (Bovine).